A 433-amino-acid chain; its full sequence is N-lysine methyltransferase SMYD2 (433 aa).

One can recognise an SET domain in the interval Gly-7–Ile-241. Lys-17–Arg-19 provides a ligand contact to S-adenosyl-L-methionine. 8 residues coordinate Zn(2+): Cys-52, Cys-55, Cys-65, Cys-68, Cys-74, Cys-78, His-86, and Cys-90. The MYND-type zinc-finger motif lies at Cys-52–Cys-90. S-adenosyl-L-methionine-binding positions include His-137, Asn-206–His-207, and Tyr-258–Phe-260. The residue at position 283 (Ser-283) is a Phosphoserine.

It belongs to the class V-like SAM-binding methyltransferase superfamily. Interacts (via MYND-type zinc finger) with EPB41L3. Interacts (via SET domain) with p53/TP53. Interacts with RB1 and HSP90AA1. Interacts with RNA polymerase II and HELZ. Interacts with SIN3A and HDAC1. In terms of tissue distribution, highly expressed in heart, skeletal muscle and brain tissue. During cardiac development, it is differentially expressed with highest expression in the neonatal heart while very low expression is detected at 12.5 dpc and adult. Specifically expressed in cardiomyocytes (at protein level).

It is found in the cytoplasm. It localises to the cytosol. The protein resides in the nucleus. It catalyses the reaction L-lysyl(4)-[histone H3] + 3 S-adenosyl-L-methionine = N(6),N(6),N(6)-trimethyl-L-lysyl(4)-[histone H3] + 3 S-adenosyl-L-homocysteine + 3 H(+). The enzyme catalyses L-lysyl-[protein] + S-adenosyl-L-methionine = N(6)-methyl-L-lysyl-[protein] + S-adenosyl-L-homocysteine + H(+). Its function is as follows. Protein-lysine N-methyltransferase that methylates both histones and non-histone proteins, including p53/TP53 and RB1. Specifically trimethylates histone H3 'Lys-4' (H3K4me3) in vivo. The activity requires interaction with HSP90alpha. Shows even higher methyltransferase activity on p53/TP53. Monomethylates 'Lys-370' of p53/TP53, leading to decreased DNA-binding activity and subsequent transcriptional regulation activity of p53/TP53. Monomethylates RB1 at 'Lys-860'. This is N-lysine methyltransferase SMYD2 (Smyd2) from Mus musculus (Mouse).